The primary structure comprises 373 residues: MKYTKQNFMMSVLGIIIYVTDLIVDIWVSVRFFHEGQYVFSALALSFMLFGTLVAQCFSYSWFKADLKKAGQESQHCFLLLHCLQGGVFTRYWFALKRGYHAAFKYDSNTSNFVEEQIDLHKEVIDRVTDLSMLRLFETYLEGCPQLILQLYILLEHGQANFSQYAAIMVSCCAISWSTVDYQVALRKSLPDKKLLNGLCPKITYLFYKLFTLLSWMLSVVLLLFLNVKIALFLLLFLWLLGIIWAFKNNTQFCTCISMEFLYRIVVGFILIFTFFNIKGQNTKCPMSCYYIVRVLGTLGILTVFWVCPLTIFNPDYFIPISITIVLTLLLGILFLIVYYGSFHPNRSAETKCDEIDGKPVLRECRMRYFLME.

The next 8 helical transmembrane spans lie at 8–28 (FMMS…DIWV), 38–58 (YVFS…AQCF), 166–186 (AAIM…QVAL), 203–223 (ITYL…VVLL), 224–244 (LFLN…LGII), 256–276 (CISM…FTFF), 295–315 (VLGT…IFNP), and 318–338 (FIPI…FLIV).

The protein belongs to the XK family. Post-translationally, undergoes proteolytic processing by caspase-3 (CASP3), caspase-6 (CASP6) and caspase-7 (CASP7) to generate the XK-related protein 9, processed form, leading to its activation.

Its subcellular location is the cell membrane. The catalysed reaction is a 1,2-diacyl-sn-glycero-3-phospho-L-serine(in) = a 1,2-diacyl-sn-glycero-3-phospho-L-serine(out). Activated upon caspase cleavage to generate the XK-related protein 9, processed form. Does not act prior the onset of apoptosis. Functionally, phospholipid scramblase that promotes phosphatidylserine exposure on apoptotic cell surface. Phosphatidylserine is a specific marker only present at the surface of apoptotic cells and acts as a specific signal for engulfment. The protein is XK-related protein 9 of Homo sapiens (Human).